The following is a 499-amino-acid chain: Aspartyl/glutamyl-tRNA(Asn/Gln) amidotransferase subunit B (499 aa).

The protein belongs to the GatB/GatE family. GatB subfamily. In terms of assembly, heterotrimer of A, B and C subunits.

The catalysed reaction is L-glutamyl-tRNA(Gln) + L-glutamine + ATP + H2O = L-glutaminyl-tRNA(Gln) + L-glutamate + ADP + phosphate + H(+). It catalyses the reaction L-aspartyl-tRNA(Asn) + L-glutamine + ATP + H2O = L-asparaginyl-tRNA(Asn) + L-glutamate + ADP + phosphate + 2 H(+). Its function is as follows. Allows the formation of correctly charged Asn-tRNA(Asn) or Gln-tRNA(Gln) through the transamidation of misacylated Asp-tRNA(Asn) or Glu-tRNA(Gln) in organisms which lack either or both of asparaginyl-tRNA or glutaminyl-tRNA synthetases. The reaction takes place in the presence of glutamine and ATP through an activated phospho-Asp-tRNA(Asn) or phospho-Glu-tRNA(Gln). This is Aspartyl/glutamyl-tRNA(Asn/Gln) amidotransferase subunit B from Salinispora arenicola (strain CNS-205).